Reading from the N-terminus, the 549-residue chain is Probable chaperonin-like protein PrmG (549 aa).

This sequence belongs to the chaperonin (HSP60) family.

Probably plays an essential role in the productive folding of PrmA, and thus in the formation of the active PrmABCD complex. The protein is Probable chaperonin-like protein PrmG (prmG) of Rhodococcus jostii (strain RHA1).